A 228-amino-acid polypeptide reads, in one-letter code: Cytochrome c oxidase subunit 2 (228 aa).

Over 1–26 (MATWANLGLQDSSSPLMEQLNFFHDH) the chain is Mitochondrial intermembrane. Residues 27 to 48 (TLLILTMITILVGYIMGMLSFN) form a helical membrane-spanning segment. Topologically, residues 49–62 (KFTNRFLLHGQTIE) are mitochondrial matrix. Residues 63–82 (IIWTVLPAIILMFIAFPSLR) traverse the membrane as a helical segment. Topologically, residues 83–228 (LLYLMDEINT…FIKWITSMTN (146 aa)) are mitochondrial intermembrane. Residues His-161, Cys-196, Glu-198, Cys-200, His-204, and Met-207 each coordinate Cu cation. Glu-198 contacts Mg(2+).

This sequence belongs to the cytochrome c oxidase subunit 2 family. In terms of assembly, component of the cytochrome c oxidase (complex IV, CIV), a multisubunit enzyme composed of a catalytic core of 3 subunits and several supernumerary subunits. The complex exists as a monomer or a dimer and forms supercomplexes (SCs) in the inner mitochondrial membrane with ubiquinol-cytochrome c oxidoreductase (cytochrome b-c1 complex, complex III, CIII). Requires Cu cation as cofactor.

It localises to the mitochondrion inner membrane. It catalyses the reaction 4 Fe(II)-[cytochrome c] + O2 + 8 H(+)(in) = 4 Fe(III)-[cytochrome c] + 2 H2O + 4 H(+)(out). Functionally, component of the cytochrome c oxidase, the last enzyme in the mitochondrial electron transport chain which drives oxidative phosphorylation. The respiratory chain contains 3 multisubunit complexes succinate dehydrogenase (complex II, CII), ubiquinol-cytochrome c oxidoreductase (cytochrome b-c1 complex, complex III, CIII) and cytochrome c oxidase (complex IV, CIV), that cooperate to transfer electrons derived from NADH and succinate to molecular oxygen, creating an electrochemical gradient over the inner membrane that drives transmembrane transport and the ATP synthase. Cytochrome c oxidase is the component of the respiratory chain that catalyzes the reduction of oxygen to water. Electrons originating from reduced cytochrome c in the intermembrane space (IMS) are transferred via the dinuclear copper A center (CU(A)) of subunit 2 and heme A of subunit 1 to the active site in subunit 1, a binuclear center (BNC) formed by heme A3 and copper B (CU(B)). The BNC reduces molecular oxygen to 2 water molecules using 4 electrons from cytochrome c in the IMS and 4 protons from the mitochondrial matrix. In Anopheles gambiae (African malaria mosquito), this protein is Cytochrome c oxidase subunit 2 (COII).